The sequence spans 161 residues: Nucleotide-binding protein Bmul_0741/BMULJ_02519 (161 aa).

The protein belongs to the YajQ family.

Its function is as follows. Nucleotide-binding protein. This is Nucleotide-binding protein Bmul_0741/BMULJ_02519 from Burkholderia multivorans (strain ATCC 17616 / 249).